A 377-amino-acid polypeptide reads, in one-letter code: tRNA(Met) cytidine acetate ligase (377 aa).

Residues 7–20 (ITEY…HLFH), glycine 100, asparagine 153, and arginine 178 contribute to the ATP site.

The protein belongs to the TmcAL family.

It is found in the cytoplasm. It carries out the reaction cytidine(34) in elongator tRNA(Met) + acetate + ATP = N(4)-acetylcytidine(34) in elongator tRNA(Met) + AMP + diphosphate. In terms of biological role, catalyzes the formation of N(4)-acetylcytidine (ac(4)C) at the wobble position of elongator tRNA(Met), using acetate and ATP as substrates. First activates an acetate ion to form acetyladenylate (Ac-AMP) and then transfers the acetyl group to tRNA to form ac(4)C34. The chain is tRNA(Met) cytidine acetate ligase from Staphylococcus epidermidis (strain ATCC 12228 / FDA PCI 1200).